The sequence spans 443 residues: Enolase B (443 aa).

Residues histidine 156 and glutamate 165 each contribute to the substrate site. Glutamate 208 acts as the Proton donor in catalysis. Residues aspartate 243, glutamate 296, and aspartate 323 each contribute to the Mg(2+) site. Residues glutamate 296 and aspartate 323 each contribute to the substrate site. Catalysis depends on lysine 348, which acts as the Proton acceptor. Residues 375–378 (SHRS) and lysine 399 contribute to the substrate site.

It belongs to the enolase family. In terms of assembly, homodimer. Requires Mg(2+) as cofactor.

It is found in the cytoplasm. The enzyme catalyses (2R)-2-phosphoglycerate = phosphoenolpyruvate + H2O. The protein operates within carbohydrate degradation; glycolysis; pyruvate from D-glyceraldehyde 3-phosphate: step 4/5. The protein is Enolase B (enoB) of Dictyostelium discoideum (Social amoeba).